Consider the following 199-residue polypeptide: Inducible T-cell costimulator (199 aa).

A signal peptide spans 1-20 (MKSGLWYFFLFCLRIKVLTG). Topologically, residues 21-140 (EINGSANYEM…YESQLCCQLK (120 aa)) are extracellular. The 103-residue stretch at 30 to 132 (MFIFHNGGVQ…LTGGYLHIYE (103 aa)) folds into the Ig-like V-type domain. 2 disulfides stabilise this stretch: C42-C109 and C63-C83. N-linked (GlcNAc...) asparagine glycans are attached at residues N89 and N110. A helical membrane pass occupies residues 141 to 161 (FWLPIGCAAFVVVCILGCILI). At 162–199 (CWLTKKKYSSSVHDPNGEYMFMRAVNTAKKSRLTDVTL) the chain is on the cytoplasmic side.

Homodimer; disulfide-linked. Interacts with ICOSLG. Interacts with PIK3R1. Interacts with TBK1; this interaction is critical for the maturation of T follicular regulatory cells. N-glycosylated. Activated T-cells. Highly expressed on tonsillar T-cells, which are closely associated with B-cells in the apical light zone of germinal centers, the site of terminal B-cell maturation. Expressed at lower levels in thymus, lung, lymph node and peripheral blood leukocytes. Expressed in the medulla of fetal and newborn thymus.

Its subcellular location is the cell membrane. It is found in the secreted. Stimulatory receptor expressed in activated or antigen-experienced T-cells that plays an important role in the immune response. Upon binding to its ligand ICOSL expressed on antigen presenting cells (APCs), delivers costimulatory signals that enhances all basic T-cell responses to a foreign antigen, namely proliferation, secretion of lymphokines including IL10, up-regulation of molecules that mediate cell-cell interaction, and effective help for antibody secretion by B-cells. Also acts as a costimulatory receptor critical for the differentiation of T follicular regulatory cells upon immune challenges such as viral infection. Mechanistically, potentiates TCR-induced calcium flux by augmenting PLCG1 activation and actin remodeling. In addition, activates PI3K signaling pathways independently of calcium flux. Essential both for efficient interaction between T and B-cells and for normal antibody responses to T-cell dependent antigens. Prevents the apoptosis of pre-activated T-cells. Plays a critical role in CD40-mediated class switching of immunoglobin isotypes. This chain is Inducible T-cell costimulator (ICOS), found in Homo sapiens (Human).